The following is a 304-amino-acid chain: MAGREKTKSANRVLRISQLDALELNKALEQLVWSQFTQCFHGFKPGLLARFEPEVKACLWLFLWRFTIYSKNATVGQSVLNIQYKNDFSSNSRYQPPSKNQKLWYAVCTIGGRWLEERCYDLFRNRHLASFGKVKQCMNVMVGLLKLGELINFLIFLQKGKFATLTERLLGIHSVFCKPQNIREVGFDYMNRELLWHGFAEFLIFLLPLINIQKFKAKLSSWCIPLTGAASSDSALASSGKECALCGEWPTMPHTIGCEHVFCYYCVKSSFLFDMYFTCPKCGIEVHSVQPLKSGIEMSEVNAL.

The Peroxisomal matrix segment spans residues 1–14; the sequence is MAGREKTKSANRVL. Residues 15–41 form a helical membrane-spanning segment; the sequence is RISQLDALELNKALEQLVWSQFTQCFH. Topologically, residues 42–47 are cytoplasmic; that stretch reads GFKPGL. Residues 48–73 form a helical membrane-spanning segment; the sequence is LARFEPEVKACLWLFLWRFTIYSKNA. Topologically, residues 74–97 are peroxisomal matrix; it reads TVGQSVLNIQYKNDFSSNSRYQPP. A helical transmembrane segment spans residues 98-124; sequence SKNQKLWYAVCTIGGRWLEERCYDLFR. At 125–132 the chain is on the cytoplasmic side; the sequence is NRHLASFG. The helical transmembrane segment at 133–159 threads the bilayer; sequence KVKQCMNVMVGLLKLGELINFLIFLQK. The Peroxisomal matrix portion of the chain corresponds to 160–186; it reads GKFATLTERLLGIHSVFCKPQNIREVG. Residues 187–210 traverse the membrane as a helical segment; the sequence is FDYMNRELLWHGFAEFLIFLLPLI. The Cytoplasmic segment spans residues 211–304; the sequence is NIQKFKAKLS…GIEMSEVNAL (94 aa). 8 residues coordinate Zn(2+): Cys-243, Cys-246, Cys-258, His-260, Cys-263, Cys-266, Cys-279, and Cys-282. The segment at 243-283 adopts an RING-type zinc-finger fold; the sequence is CALCGEWPTMPHTIGCEHVFCYYCVKSSFLFDMYFTCPKCG.

It belongs to the pex2/pex10/pex12 family. Component of the PEX2-PEX10-PEX12 retrotranslocation channel, composed of PEX2, PEX10 and PEX12. In terms of processing, forms intramolecular and intermolecular disulfide bonds in response to reactive oxygen species (ROS), promoting higher stability.

It localises to the peroxisome membrane. The catalysed reaction is [E2 ubiquitin-conjugating enzyme]-S-ubiquitinyl-L-cysteine + [acceptor protein]-L-cysteine = [E2 ubiquitin-conjugating enzyme]-L-cysteine + [acceptor protein]-S-ubiquitinyl-L-cysteine.. It catalyses the reaction S-ubiquitinyl-[E2 ubiquitin-conjugating enzyme]-L-cysteine + [acceptor protein]-L-lysine = [E2 ubiquitin-conjugating enzyme]-L-cysteine + N(6)-ubiquitinyl-[acceptor protein]-L-lysine.. It participates in protein modification; protein ubiquitination. Its function is as follows. E3 ubiquitin-protein ligase component of a retrotranslocation channel required for peroxisome organization by mediating export of the PEX5 receptor from peroxisomes to the cytosol, thereby promoting PEX5 recycling. The retrotranslocation channel is composed of PEX2, PEX10 and PEX12; each subunit contributing transmembrane segments that coassemble into an open channel that specifically allows the passage of PEX5 through the peroxisomal membrane. PEX2 also regulates peroxisome organization by acting as a E3 ubiquitin-protein ligase. PEX2 ubiquitinates PEX5 during its passage through the retrotranslocation channel: catalyzes monoubiquitination of PEX5 at 'Cys-11', a modification that acts as a signal for PEX5 extraction into the cytosol. Required for pexophagy in response to starvation by mediating ubiquitination of peroxisomal proteins, such as PEX5 and ABCD3/PMP70. Also involved in the response to reactive oxygen species (ROS) by mediating 'Lys-48'-linked polyubiquitination and subsequent degradation of PNPLA2/ATGL, thereby regulating lipolysis. In Cricetulus griseus (Chinese hamster), this protein is Peroxisome biogenesis factor 2 (PEX2).